The sequence spans 507 residues: Maturase K (507 aa).

This sequence belongs to the intron maturase 2 family. MatK subfamily.

It is found in the plastid. Its subcellular location is the chloroplast. In terms of biological role, usually encoded in the trnK tRNA gene intron. Probably assists in splicing its own and other chloroplast group II introns. The protein is Maturase K of Asimina triloba (Pawpaw).